Consider the following 311-residue polypeptide: Aspartate carbamoyltransferase catalytic subunit (311 aa).

Positions 52 and 53 each coordinate carbamoyl phosphate. Lys-80 contacts L-aspartate. Carbamoyl phosphate contacts are provided by Arg-102, His-131, and Gln-134. Arg-164 and Arg-216 together coordinate L-aspartate. The carbamoyl phosphate site is built by Ala-259 and Pro-260.

Belongs to the aspartate/ornithine carbamoyltransferase superfamily. ATCase family. In terms of assembly, heterododecamer (2C3:3R2) of six catalytic PyrB chains organized as two trimers (C3), and six regulatory PyrI chains organized as three dimers (R2).

It catalyses the reaction carbamoyl phosphate + L-aspartate = N-carbamoyl-L-aspartate + phosphate + H(+). Its pathway is pyrimidine metabolism; UMP biosynthesis via de novo pathway; (S)-dihydroorotate from bicarbonate: step 2/3. In terms of biological role, catalyzes the condensation of carbamoyl phosphate and aspartate to form carbamoyl aspartate and inorganic phosphate, the committed step in the de novo pyrimidine nucleotide biosynthesis pathway. The chain is Aspartate carbamoyltransferase catalytic subunit from Lactiplantibacillus plantarum (strain ATCC BAA-793 / NCIMB 8826 / WCFS1) (Lactobacillus plantarum).